The chain runs to 217 residues: Uridylate kinase (217 aa).

6-10 contacts ATP; sequence KISGR. G38 contacts UMP. Residues G39 and R43 each coordinate ATP. Residues D60 and 107–113 each bind UMP; that span reads FQPGQST. Residues N134, Y139, and D142 each contribute to the ATP site.

It belongs to the UMP kinase family. Homohexamer.

It is found in the cytoplasm. It catalyses the reaction UMP + ATP = UDP + ADP. It functions in the pathway pyrimidine metabolism; CTP biosynthesis via de novo pathway; UDP from UMP (UMPK route): step 1/1. With respect to regulation, inhibited by UTP. Functionally, catalyzes the reversible phosphorylation of UMP to UDP. This Pyrobaculum arsenaticum (strain DSM 13514 / JCM 11321 / PZ6) protein is Uridylate kinase.